Reading from the N-terminus, the 355-residue chain is Elongation factor Ts (355 aa).

The involved in Mg(2+) ion dislocation from EF-Tu stretch occupies residues 82–85; it reads TDFV.

Belongs to the EF-Ts family.

It localises to the cytoplasm. Functionally, associates with the EF-Tu.GDP complex and induces the exchange of GDP to GTP. It remains bound to the aminoacyl-tRNA.EF-Tu.GTP complex up to the GTP hydrolysis stage on the ribosome. The sequence is that of Elongation factor Ts from Wolinella succinogenes (strain ATCC 29543 / DSM 1740 / CCUG 13145 / JCM 31913 / LMG 7466 / NCTC 11488 / FDC 602W) (Vibrio succinogenes).